A 152-amino-acid chain; its full sequence is Ribonuclease H (152 aa).

Residues 4–145 enclose the RNase H type-1 domain; the sequence is SRSMVEIFSD…CDELARQAIA (142 aa). Mg(2+) is bound by residues Asp13, Glu51, Asp73, and Asp137.

This sequence belongs to the RNase H family. Monomer. The cofactor is Mg(2+).

The protein resides in the cytoplasm. It catalyses the reaction Endonucleolytic cleavage to 5'-phosphomonoester.. Functionally, endonuclease that specifically degrades the RNA of RNA-DNA hybrids. The polypeptide is Ribonuclease H (Syntrophotalea carbinolica (strain DSM 2380 / NBRC 103641 / GraBd1) (Pelobacter carbinolicus)).